The sequence spans 429 residues: D-amino acid dehydrogenase (429 aa).

FAD is bound at residue 3–17; that stretch reads VLILGSGVIGVTSAW.

Belongs to the DadA oxidoreductase family. FAD serves as cofactor.

It catalyses the reaction a D-alpha-amino acid + A + H2O = a 2-oxocarboxylate + AH2 + NH4(+). Its pathway is amino-acid degradation; D-alanine degradation; NH(3) and pyruvate from D-alanine: step 1/1. Oxidative deamination of D-amino acids. This chain is D-amino acid dehydrogenase, found in Xanthomonas euvesicatoria pv. vesicatoria (strain 85-10) (Xanthomonas campestris pv. vesicatoria).